Reading from the N-terminus, the 468-residue chain is ATP synthase subunit beta (468 aa).

Residue 155–162 (GGAGVGKT) coordinates ATP.

The protein belongs to the ATPase alpha/beta chains family. F-type ATPases have 2 components, CF(1) - the catalytic core - and CF(0) - the membrane proton channel. CF(1) has five subunits: alpha(3), beta(3), gamma(1), delta(1), epsilon(1). CF(0) has three main subunits: a(1), b(2) and c(9-12). The alpha and beta chains form an alternating ring which encloses part of the gamma chain. CF(1) is attached to CF(0) by a central stalk formed by the gamma and epsilon chains, while a peripheral stalk is formed by the delta and b chains.

The protein resides in the cell membrane. It catalyses the reaction ATP + H2O + 4 H(+)(in) = ADP + phosphate + 5 H(+)(out). In terms of biological role, produces ATP from ADP in the presence of a proton gradient across the membrane. The catalytic sites are hosted primarily by the beta subunits. This chain is ATP synthase subunit beta, found in Streptococcus thermophilus (strain ATCC BAA-250 / LMG 18311).